Here is a 352-residue protein sequence, read N- to C-terminus: Glycerol-1-phosphate dehydrogenase [NAD(P)+] (352 aa).

NAD(+)-binding positions include 99–103 (GKSID) and 121–124 (TVAS). Asp-126 provides a ligand contact to substrate. Ser-130 is a binding site for NAD(+). Asp-173 contributes to the substrate binding site. The Zn(2+) site is built by Asp-173 and His-253. His-257 is a binding site for substrate. Zn(2+) is bound at residue His-269.

This sequence belongs to the glycerol-1-phosphate dehydrogenase family. In terms of assembly, homodimer. It depends on Zn(2+) as a cofactor.

The protein localises to the cytoplasm. It carries out the reaction sn-glycerol 1-phosphate + NAD(+) = dihydroxyacetone phosphate + NADH + H(+). It catalyses the reaction sn-glycerol 1-phosphate + NADP(+) = dihydroxyacetone phosphate + NADPH + H(+). It functions in the pathway membrane lipid metabolism; glycerophospholipid metabolism. Its activity is regulated as follows. Totally inhibited by EDTA in vitro. Functionally, catalyzes the NAD(P)H-dependent reduction of dihydroxyacetonephosphate (DHAP or glycerone phosphate) to glycerol 1-phosphate (G1P). The G1P thus generated is used as the glycerophosphate backbone of phospholipids in the cellular membranes of Archaea. Is also able to catalyze the reverse reaction, i.e. the NAD(+)-dependent oxidation of G1P but not of G3P. Is not active toward glycerol, dihydroxyacetone, glyceraldehyde phosphate, and glycerol-2-phosphate. The chain is Glycerol-1-phosphate dehydrogenase [NAD(P)+] (egsA) from Aeropyrum pernix (strain ATCC 700893 / DSM 11879 / JCM 9820 / NBRC 100138 / K1).